The following is a 175-amino-acid chain: Cuticle protein 16.5, isoform B (175 aa).

Repeat copies occupy residues 17–20 (AAPA), 25–28 (AAPA), 31–34 (AAPA), 38–41 (AAPA), 44–47 (AAPA), 51–54 (AAPA), 57–60 (AAPA), 64–67 (AAPA), 70–73 (AAPA), 77–80 (AAPA), 83–86 (AAPA), 91–94 (AAPA), 99–102 (AAPA), 106–109 (AAPA), 134–137 (AAPA), 144–147 (AAPA), 151–154 (AAPA), 158–161 (AAPA), and 165–168 (AAPA).

Functionally, component of the cuticle of migratory locust which contains more than 100 different structural proteins. This chain is Cuticle protein 16.5, isoform B, found in Locusta migratoria (Migratory locust).